The chain runs to 234 residues: UstYa family oxidase phomYd' (234 aa).

A disordered region spans residues 1 to 26 (MEKFFSPSRHNYADLSPTDVPASEES). The helical transmembrane segment at 47-69 (VLVNRLLAASTVALVMVSLWLGW) threads the bilayer. An HXXHC 1 motif is present at residues 151–155 (HWDHC). Asn208 is a glycosylation site (N-linked (GlcNAc...) asparagine).

The protein belongs to the ustYa family.

Its subcellular location is the membrane. It functions in the pathway mycotoxin biosynthesis. Functionally, ustYa family oxidase; part of the gene cluster that mediates the biosynthesis of the phomopsins, a group of hexapeptide mycotoxins which infects lupins and causes lupinosis disease in livestock. Within the pathway, phomYd' catalyzes the desaturation of the Asp moiety into 2,3-dehydroaspartic acid (dAsp). The pathway starts with the processing of the precursor phomA' by several endopeptidases including kexin proteases as well as the cluster-specific S41 family peptidase phomP1 and the oligopeptidase phomG' to produce 10 identical copies of the hexapeptide Tyr-Val-Ile-Pro-Ile-Asp. After being excised from the precursor peptide, the core peptides are cyclized and modified post-translationally by enzymes encoded within the gene cluster. The timing and order of proteolysis of the phomA' precursor and PTMs are still unknown. Two tyrosinase-like enzymes, phomQ1' and phomQ2, catalyze the chlorination and hydroxylation of Tyr, respectively. PhomYb, is proposed to be involved in the construction of the macrocyclic structure. The other 4 ustYa family proteins may be involved in PTMs that generate the unique structure of phomopsin A. PhomYa' is required for the hydroxylation of C-beta of Tyr. PhomYc', phomYd', and phomYe are responsible for the biosynthesis of 2,3-dehydroisoleucine (dIle), 2,3-dehydroaspartic acid (dAsp), and 3,4-dehydroproline (dPro), respectively. While dIle formation by phomYc' is indispensable for the installation of dAsp by phomYd', the order of the other PTMs have not been elucidated yet. Most of the biosynthetic enzymes likely have broad substrate specificity, and thus, there might be a metabolic grid from a precursor to phomopsin A. The enzyme(s) responsible for the biosynthesis of 3,4-dehydrovaline (dVal) have also not been identified yet. Finally, phomM' acts as an S-adenosylmethionine-dependent alpha-N-methyltransferase that catalyzes two successive N-methylation reactions, converting N-desmethyl-phomopsin A to phomopsin A and phomopsin A further to an N,N-dimethylated congener called phomopsin E. This is UstYa family oxidase phomYd' from Diaporthe leptostromiformis (Lupinosis disease fungus).